A 71-amino-acid polypeptide reads, in one-letter code: Ceratotoxin-A (71 aa).

An N-terminal signal peptide occupies residues 1–23 (MANLKAVFLICIVAFIALQCVVA). 2 consecutive propeptides follow at residues 24–35 (EPAAEDSVVVKR) and 65–71 (VAAGLVG).

Homomer of four to six subunits.

It is found in the secreted. Female-specific peptides with potent activity against Gram-positive and Gram-negative bacteria. They have as well hemolytic activity. The sequence is that of Ceratotoxin-A (CTXA1) from Ceratitis capitata (Mediterranean fruit fly).